A 382-amino-acid chain; its full sequence is Anhydro-N-acetylmuramic acid kinase (382 aa).

22-29 lines the ATP pocket; sequence GTSMDGVD.

Belongs to the anhydro-N-acetylmuramic acid kinase family.

It catalyses the reaction 1,6-anhydro-N-acetyl-beta-muramate + ATP + H2O = N-acetyl-D-muramate 6-phosphate + ADP + H(+). It functions in the pathway amino-sugar metabolism; 1,6-anhydro-N-acetylmuramate degradation. It participates in cell wall biogenesis; peptidoglycan recycling. In terms of biological role, catalyzes the specific phosphorylation of 1,6-anhydro-N-acetylmuramic acid (anhMurNAc) with the simultaneous cleavage of the 1,6-anhydro ring, generating MurNAc-6-P. Is required for the utilization of anhMurNAc either imported from the medium or derived from its own cell wall murein, and thus plays a role in cell wall recycling. The sequence is that of Anhydro-N-acetylmuramic acid kinase from Burkholderia vietnamiensis (strain G4 / LMG 22486) (Burkholderia cepacia (strain R1808)).